We begin with the raw amino-acid sequence, 276 residues long: MLMITSFANPRVAQAFVDYMATQGVILTIQQHNQSDIWLADESQAERVRVELARFIENPGDPRYLAASWQSGQTNSGLRYRRFPFLATLRERAGPVTWIVMLACVVVYIAMSLIGDQTVMVWLAWPFDPVLKFEVWRYFTHIFMHFSLMHILFNLLWWWYLGGAVEKRLGSGKLIVITVISALLSGYVQQKFSGPWFGGLSGVVYALMGYVWLRGERDPQSGIYLQRGLIIFALLWIVAGWFDWFGMSMANGAHIAGLIVGLAMAFVDTLNARKRT.

Helical transmembrane passes span 94-114, 142-162, 169-189, 192-212, 229-249, and 250-270; these read GPVTWIVMLACVVVYIAMSLI, IFMHFSLMHILFNLLWWWYLG, LGSGKLIVITVISALLSGYVQ, FSGPWFGGLSGVVYALMGYVW, LIIFALLWIVAGWFDWFGMSM, and ANGAHIAGLIVGLAMAFVDTL. The active-site Nucleophile is the serine 201. Histidine 254 is a catalytic residue.

The protein belongs to the peptidase S54 family.

Its subcellular location is the cell inner membrane. It carries out the reaction Cleaves type-1 transmembrane domains using a catalytic dyad composed of serine and histidine that are contributed by different transmembrane domains.. Functionally, rhomboid-type serine protease that catalyzes intramembrane proteolysis. The sequence is that of Rhomboid protease GlpG from Salmonella typhi.